The following is a 394-amino-acid chain: Elongation factor Tu 2 (394 aa).

The region spanning 10–204 (KPHVNVGTIG…YLDSYIPEPE (195 aa)) is the tr-type G domain. Residues 19 to 26 (GHVDHGKT) form a G1 region. Residue 19 to 26 (GHVDHGKT) participates in GTP binding. Thr26 serves as a coordination point for Mg(2+). The interval 60–64 (GITIN) is G2. The tract at residues 81–84 (DCPG) is G3. GTP-binding positions include 81-85 (DCPGH) and 136-139 (NKCD). The segment at 136-139 (NKCD) is G4. The interval 174-176 (SAL) is G5.

The protein belongs to the TRAFAC class translation factor GTPase superfamily. Classic translation factor GTPase family. EF-Tu/EF-1A subfamily. In terms of assembly, monomer.

It is found in the cytoplasm. The catalysed reaction is GTP + H2O = GDP + phosphate + H(+). In terms of biological role, GTP hydrolase that promotes the GTP-dependent binding of aminoacyl-tRNA to the A-site of ribosomes during protein biosynthesis. This Yersinia pseudotuberculosis serotype O:1b (strain IP 31758) protein is Elongation factor Tu 2.